The following is a 224-amino-acid chain: MADS-box transcription factor 16 (224 aa).

The MADS-box domain maps to Met-1–Ser-61. The 91-residue stretch at Tyr-84–Pro-174 folds into the K-box domain.

In terms of assembly, may interact with the K-box of MADS4, MADS6 and MADS8. May form a heterodimer with MADS4. In terms of tissue distribution, expressed in lodicules, stamens and carpels.

Its subcellular location is the nucleus. Probable transcription factor involved in the development of floral organs. Required for normal development of lodicules and stamens (whorls 2 and 3). May function as a heterodimer with MADS4. The polypeptide is MADS-box transcription factor 16 (MADS16) (Oryza sativa subsp. japonica (Rice)).